The sequence spans 33 residues: Phosphoglycerate kinase (33 aa).

Lys13 is an AMP binding site. An ATP-binding site is contributed by Lys13.

It belongs to the phosphoglycerate kinase family. As to quaternary structure, monomer. The cofactor is Mg(2+).

It carries out the reaction (2R)-3-phosphoglycerate + ATP = (2R)-3-phospho-glyceroyl phosphate + ADP. This chain is Phosphoglycerate kinase, found in Pseudotsuga menziesii (Douglas-fir).